The primary structure comprises 207 residues: Thymidine kinase (207 aa).

ATP-binding positions include Gly15–Ser22 and Asp88–Gln91. Glu89 (proton acceptor) is an active-site residue. Residues Cys145, Cys148, Cys183, and His186 each contribute to the Zn(2+) site. Residues Arg184 to Asn198 are compositionally biased toward basic residues. Positions Arg184–Glu207 are disordered.

It belongs to the thymidine kinase family. As to quaternary structure, homotetramer.

It is found in the cytoplasm. It catalyses the reaction thymidine + ATP = dTMP + ADP + H(+). The polypeptide is Thymidine kinase (Geobacillus kaustophilus (strain HTA426)).